The following is a 295-amino-acid chain: MRPEIAVLDIQGQYRVYTGFYRADAAENTIILINGSLATTASFAQTVRNLHPQFNVVLFDQPYAGKSKPHNRQERFISKETEAHILLELIEHFQADHVMSFSWGGASTLLALAHQPRGVKKAVVSSFSPVINEPMRDYLDRGCQYLAACDRYQVGNLVNDTIGKHLPSLFKRFNYRHVSSLDSHEYAQMHFHINEVLQHDLERALDGARNIDIPVLFINGDRDEYTTVEDARQFSKHVGRSHFSVIRDAGHFLDMENKTACEDTRSVMLGFLKPTMREPRHRYQPVKQGQHALAI.

Positions asparagine 28–aspartate 254 constitute an AB hydrolase-1 domain.

Its pathway is polyester biosynthesis; polyhydroxyalkanoate biosynthesis. Catalyzes the transfer of the acyl moiety from in vitro synthesized 3-hydroxydecanoyl-CoA to acyl carrier protein. The protein is (R)-3-hydroxydecanoyl-ACP:CoA transacylase (phaG) of Ectopseudomonas oleovorans (Pseudomonas oleovorans).